A 296-amino-acid polypeptide reads, in one-letter code: MFKRYLQVTKPGIIMGNLISVAGGFFLASRGEIDWILMLATVIGLSLVVASGCAINNYIDRDIDAKMQRTRNRVTVNGEMSGKAAFFHGIVLGVIGFALLSYFTNWVAVAFAAFGYVVYVGLYTMYFKRKSVYGTFVGSLSGAVPPVVGYCAAAGQFDAGAAILLTMFCIWQMPHSYAIAIFRYKDYEAAGIPVLPVSQGIAKAKRHIILHIAAFAVVAALLPLTGYVGIGFMVVALATSLWWLAMALRGYRPGIDVNGWARQVFFFSIITVTALSVTMALDFNEVSPNLLVFAAH.

8 consecutive transmembrane segments (helical) span residues 8–28 (VTKP…FFLA), 35–55 (WILM…GCAI), 84–104 (AAFF…SYFT), 107–127 (VAVA…TMYF), 132–152 (VYGT…GYCA), 162–182 (AILL…IAIF), 215–235 (FAVV…FMVV), and 264–284 (VFFF…LDFN).

Belongs to the UbiA prenyltransferase family. Protoheme IX farnesyltransferase subfamily.

Its subcellular location is the cell inner membrane. It catalyses the reaction heme b + (2E,6E)-farnesyl diphosphate + H2O = Fe(II)-heme o + diphosphate. It participates in porphyrin-containing compound metabolism; heme O biosynthesis; heme O from protoheme: step 1/1. Functionally, converts heme B (protoheme IX) to heme O by substitution of the vinyl group on carbon 2 of heme B porphyrin ring with a hydroxyethyl farnesyl side group. In Marinomonas sp. (strain MWYL1), this protein is Protoheme IX farnesyltransferase.